A 261-amino-acid polypeptide reads, in one-letter code: Phosphate import ATP-binding protein PstB 4 (261 aa).

Residues 8-256 form the ABC transporter domain; it reads IKVNNLSFYY…PHDSRTREYV (249 aa). 40-47 is a binding site for ATP; that stretch reads GPSGCGKS.

This sequence belongs to the ABC transporter superfamily. Phosphate importer (TC 3.A.1.7) family. The complex is composed of two ATP-binding proteins (PstB), two transmembrane proteins (PstC and PstA) and a solute-binding protein (PstS).

It is found in the cell inner membrane. It carries out the reaction phosphate(out) + ATP + H2O = ADP + 2 phosphate(in) + H(+). Its function is as follows. Part of the ABC transporter complex PstSACB involved in phosphate import. Responsible for energy coupling to the transport system. The polypeptide is Phosphate import ATP-binding protein PstB 4 (Trichormus variabilis (strain ATCC 29413 / PCC 7937) (Anabaena variabilis)).